The following is a 91-amino-acid chain: C-C motif chemokine 5 (91 aa).

The signal sequence occupies residues 1-23 (MKVSATAFAVLLMAAALCAPASA). Intrachain disulfides connect Cys-33/Cys-57 and Cys-34/Cys-73.

The protein belongs to the intercrine beta (chemokine CC) family.

Its subcellular location is the secreted. Functionally, chemoattractant for blood monocytes, memory T-helper cells and eosinophils. Causes the release of histamine from basophils and activates eosinophils. May activate several chemokine receptors including CCR1, CCR3, CCR4 and CCR5. May also be an agonist of the G protein-coupled receptor GPR75. Together with GPR75, may play a role in neuron survival through activation of a downstream signaling pathway involving the PI3, Akt and MAP kinases. By activating GPR75 may also play a role in insulin secretion by islet cells. In Bos taurus (Bovine), this protein is C-C motif chemokine 5 (CCL5).